The following is a 348-amino-acid chain: Protein-arginine N-acetylglucosaminyltransferase SseK2 (348 aa).

UDP-N-acetyl-alpha-D-glucosamine contacts are provided by residues 64-66, Y88, and 237-240; these read QWF and YLDA. A DXD motif motif is present at residues 239-241; that stretch reads DAD. Residue D241 participates in Mn(2+) binding. E271 (proton acceptor) is an active-site residue. Residues N338, S340, and 345 to 348 each bind UDP-N-acetyl-alpha-D-glucosamine; that span reads SSWR. Mn(2+)-binding residues include N338 and S340.

It belongs to the glycosyltransferase NleB family. Mn(2+) is required as a cofactor.

The protein resides in the secreted. The protein localises to the host Golgi apparatus. It carries out the reaction L-arginyl-[protein] + UDP-N-acetyl-alpha-D-glucosamine = N(omega)-(N-acetyl-beta-D-glucosaminyl)-L-arginyl-[protein] + UDP + H(+). Protein-arginine N-acetylglucosaminyltransferase activity is inhibited by 100066N compound (flavone analog) and 102644N compound (a substituted isoxazole). Protein-arginine N-acetylglucosaminyltransferase effector that catalyzes the transfer of a single N-acetylglucosamine (GlcNAc) to a conserved arginine residue in the death domain of host proteins such as FADD: arginine GlcNAcylation prevents homotypic/heterotypic death domain interactions. Also acts on host proteins without a death domain: catalyzes arginine GlcNAcylation of host small Rab1 GTPase, thereby preventing GTPase activity and leading to impaired host vesicular protein transport. In contrast to Ssek1, not able to disrupt TNF signaling in infected cells. This chain is Protein-arginine N-acetylglucosaminyltransferase SseK2, found in Salmonella typhimurium (strain SL1344).